Here is a 1388-residue protein sequence, read N- to C-terminus: Putative ATP-dependent RNA helicase DHX57 (1388 aa).

The segment covering M1 to P11 has biased composition (basic residues). Disordered regions lie at residues M1–E107 and E121–E154. Residues H34 to S51 are compositionally biased toward gly residues. Residues D79 to P89 show a composition bias toward basic and acidic residues. Phosphoserine occurs at positions 128 and 133. The UBA domain occupies P175–Q220. The C3H1-type zinc-finger motif lies at D299–P326. A Phosphoserine modification is found at S475. One can recognise a Helicase ATP-binding domain in the interval L555–P722. G568–T575 is a binding site for ATP. Residues D669 to H672 carry the DEVH box motif. One can recognise a Helicase C-terminal domain in the interval L832–E1012.

The protein belongs to the DEAD box helicase family. DEAH subfamily.

The enzyme catalyses ATP + H2O = ADP + phosphate + H(+). Its function is as follows. Probable ATP-binding RNA helicase. In Mus musculus (Mouse), this protein is Putative ATP-dependent RNA helicase DHX57 (Dhx57).